A 256-amino-acid chain; its full sequence is D-aminoacyl-tRNA deacylase (256 aa).

This sequence belongs to the DtdA deacylase family. Monomer. It depends on Zn(2+) as a cofactor.

It catalyses the reaction a D-aminoacyl-tRNA + H2O = a tRNA + a D-alpha-amino acid + H(+). The catalysed reaction is glycyl-tRNA(Ala) + H2O = tRNA(Ala) + glycine + H(+). Its function is as follows. D-aminoacyl-tRNA deacylase with broad substrate specificity. By recycling D-aminoacyl-tRNA to D-amino acids and free tRNA molecules, this enzyme counteracts the toxicity associated with the formation of D-aminoacyl-tRNA entities in vivo. In Thermoplasma acidophilum (strain ATCC 25905 / DSM 1728 / JCM 9062 / NBRC 15155 / AMRC-C165), this protein is D-aminoacyl-tRNA deacylase.